Consider the following 327-residue polypeptide: Undecaprenyl-phosphate 4-deoxy-4-formamido-L-arabinose transferase (327 aa).

2 helical membrane passes run 235–255 (LLSLVGSAIALLGFTFSVLLV) and 270–290 (VFTLFAVLFMFIGAQFVGMGL).

This sequence belongs to the glycosyltransferase 2 family.

The protein localises to the cell inner membrane. The catalysed reaction is UDP-4-deoxy-4-formamido-beta-L-arabinose + di-trans,octa-cis-undecaprenyl phosphate = 4-deoxy-4-formamido-alpha-L-arabinopyranosyl di-trans,octa-cis-undecaprenyl phosphate + UDP. It functions in the pathway glycolipid biosynthesis; 4-amino-4-deoxy-alpha-L-arabinose undecaprenyl phosphate biosynthesis; 4-amino-4-deoxy-alpha-L-arabinose undecaprenyl phosphate from UDP-4-deoxy-4-formamido-beta-L-arabinose and undecaprenyl phosphate: step 1/2. It participates in bacterial outer membrane biogenesis; lipopolysaccharide biosynthesis. Catalyzes the transfer of 4-deoxy-4-formamido-L-arabinose from UDP to undecaprenyl phosphate. The modified arabinose is attached to lipid A and is required for resistance to polymyxin and cationic antimicrobial peptides. This Yersinia pseudotuberculosis serotype IB (strain PB1/+) protein is Undecaprenyl-phosphate 4-deoxy-4-formamido-L-arabinose transferase.